A 603-amino-acid chain; its full sequence is Golgin subfamily A member 8B (603 aa).

4 disordered regions span residues 1-82, 95-125, 398-419, and 460-492; these read MAEE…NSRS, LKQQ…ELEG, TSAE…ESSG, and PGDS…GAAG. The span at 46–66 shows a compositional bias: low complexity; it reads AASGGCHSSEASSSASSSLHA. Positions 69-82 are enriched in polar residues; the sequence is SPCQEQAAVLNSRS. 2 coiled-coil regions span residues 82-173 and 212-440; these read SIKI…GELE and LKGH…LELG. Residues 100 to 124 are compositionally biased toward basic and acidic residues; it reads KQVEHQLEEEKKANNEKQKAERELE. Residues 469–482 are compositionally biased toward gly residues; it reads PGGGHHQAGPGQGG. The golgi-targeting domain stretch occupies residues 491–603; the sequence is AGDGVAACGS…CWAWLPRRRR (113 aa).

Belongs to the GOLGA8 family. As to expression, highly expressed in brain, heart and kidney. Detected at lower levels in liver, thymus, spleen, lung and peripheral blood leukocytes.

Its subcellular location is the golgi apparatus. The protein localises to the golgi stack membrane. Its function is as follows. May be involved in maintaining Golgi structure. In Homo sapiens (Human), this protein is Golgin subfamily A member 8B (GOLGA8B).